The sequence spans 681 residues: Mitosis inhibitor nif1 (681 aa).

Positions 22–43 (LNKKDGNDDDKAEHSKRSGYHG) are disordered. Residues 23 to 37 (NKKDGNDDDKAEHSK) are compositionally biased toward basic and acidic residues. Ser70 is subject to Phosphoserine. Disordered stretches follow at residues 80–104 (TTSG…SSPF) and 182–324 (YYHE…SSRQ). Over residues 92-103 (ESPASPAEASSP) the composition is skewed to low complexity. Polar residues predominate over residues 191-203 (TASNTSPTPNSIK). The residue at position 196 (Ser196) is a Phosphoserine. Residues 238 to 278 (SSGDSTPLSGSSSSKGMLMSMSTSENHSLSSNPELSNSNLL) show a composition bias toward low complexity. Positions 296–306 (SSKEPDKEHST) are enriched in basic and acidic residues. 2 Sel1-like repeats span residues 547–582 (ALIL…AWGD) and 583–618 (ADAQ…FQGI).

Its subcellular location is the cytoplasm. Functionally, functions as a negative regulator of mitosis. It interacts with the C-terminal of nim1, thereby inhibiting its kinase activity which phosphorylates wee1. This is Mitosis inhibitor nif1 (nif1) from Schizosaccharomyces pombe (strain 972 / ATCC 24843) (Fission yeast).